Here is a 315-residue protein sequence, read N- to C-terminus: 4-hydroxy-3-methylbut-2-enyl diphosphate reductase (315 aa).

Cysteine 18 is a [4Fe-4S] cluster binding site. Residues histidine 47 and histidine 80 each coordinate (2E)-4-hydroxy-3-methylbut-2-enyl diphosphate. Dimethylallyl diphosphate-binding residues include histidine 47 and histidine 80. Histidine 47 and histidine 80 together coordinate isopentenyl diphosphate. Cysteine 102 is a binding site for [4Fe-4S] cluster. Histidine 130 provides a ligand contact to (2E)-4-hydroxy-3-methylbut-2-enyl diphosphate. A dimethylallyl diphosphate-binding site is contributed by histidine 130. Position 130 (histidine 130) interacts with isopentenyl diphosphate. Residue glutamate 132 is the Proton donor of the active site. Residue threonine 171 coordinates (2E)-4-hydroxy-3-methylbut-2-enyl diphosphate. Cysteine 201 is a binding site for [4Fe-4S] cluster. The (2E)-4-hydroxy-3-methylbut-2-enyl diphosphate site is built by serine 229, serine 230, asparagine 231, and serine 274. Dimethylallyl diphosphate-binding residues include serine 229, serine 230, asparagine 231, and serine 274. Positions 229, 230, 231, and 274 each coordinate isopentenyl diphosphate.

This sequence belongs to the IspH family. It depends on [4Fe-4S] cluster as a cofactor.

It catalyses the reaction isopentenyl diphosphate + 2 oxidized [2Fe-2S]-[ferredoxin] + H2O = (2E)-4-hydroxy-3-methylbut-2-enyl diphosphate + 2 reduced [2Fe-2S]-[ferredoxin] + 2 H(+). It carries out the reaction dimethylallyl diphosphate + 2 oxidized [2Fe-2S]-[ferredoxin] + H2O = (2E)-4-hydroxy-3-methylbut-2-enyl diphosphate + 2 reduced [2Fe-2S]-[ferredoxin] + 2 H(+). It functions in the pathway isoprenoid biosynthesis; dimethylallyl diphosphate biosynthesis; dimethylallyl diphosphate from (2E)-4-hydroxy-3-methylbutenyl diphosphate: step 1/1. Its pathway is isoprenoid biosynthesis; isopentenyl diphosphate biosynthesis via DXP pathway; isopentenyl diphosphate from 1-deoxy-D-xylulose 5-phosphate: step 6/6. Its function is as follows. Catalyzes the conversion of 1-hydroxy-2-methyl-2-(E)-butenyl 4-diphosphate (HMBPP) into a mixture of isopentenyl diphosphate (IPP) and dimethylallyl diphosphate (DMAPP). Acts in the terminal step of the DOXP/MEP pathway for isoprenoid precursor biosynthesis. The polypeptide is 4-hydroxy-3-methylbut-2-enyl diphosphate reductase (Hyphomonas neptunium (strain ATCC 15444)).